Here is a 386-residue protein sequence, read N- to C-terminus: Decapping nuclease RAI1 (386 aa).

Residue Arg-34 coordinates substrate. A divalent metal cation is bound at residue Glu-159. Glu-205 is a substrate binding site. 3 residues coordinate a divalent metal cation: Asp-207, Glu-225, and Leu-226. Substrate-binding residues include Lys-227 and Gln-251.

The protein belongs to the DXO/Dom3Z family. Interacts with RAT1; the interaction is direct, stabilizes RAT1 protein structure and stimulates its exoribonuclease activity. The interaction also stimulates RAI1 pyrophosphohydrolase activity, probably by recruiting it to mRNA substrates. It depends on a divalent metal cation as a cofactor.

Its subcellular location is the nucleus. The enzyme catalyses a 5'-end NAD(+)-phospho-ribonucleoside in mRNA + H2O = a 5'-end phospho-ribonucleoside in mRNA + NAD(+) + H(+). It catalyses the reaction a 5'-end (N(7)-methyl 5'-triphosphoguanosine)-ribonucleoside-ribonucleotide in mRNA + H2O = a (N(7)-methyl 5'-triphosphoguanosine)-nucleoside + a 5'-end phospho-ribonucleoside in mRNA + H(+). The catalysed reaction is a 5'-end triphospho-ribonucleoside in mRNA + H2O = a 5'-end phospho-ribonucleoside in mRNA + diphosphate + H(+). Functionally, decapping enzyme for NAD-capped RNAs: specifically hydrolyzes the nicotinamide adenine dinucleotide (NAD) cap from a subset of RNAs by removing the entire NAD moiety from the 5'-end of an NAD-capped RNA. The NAD-cap is present at the 5'-end of some RNAs and snoRNAs. In contrast to the canonical 5'-end N7 methylguanosine (m7G) cap, the NAD cap promotes mRNA decay. Also acts as a non-canonical decapping enzyme that removes the entire cap structure of m7G capped or incompletely capped RNAs. Has decapping activity toward incomplete 5'-end m7G cap mRNAs such as unmethylated 5'-end-capped RNA (cap0), while it has no activity toward 2'-O-ribose methylated m7G cap (cap1). Also possesses RNA 5'-pyrophosphohydrolase activity by hydrolyzing the 5'-end triphosphate to release pyrophosphates. Stimulates exoribonuclease activity of Rat1, allowing it to degrade RNAs with stable secondary structure more effectively. The protein is Decapping nuclease RAI1 (RAI1) of Cryptococcus neoformans var. neoformans serotype D (strain B-3501A) (Filobasidiella neoformans).